A 1182-amino-acid polypeptide reads, in one-letter code: Rho guanine nucleotide exchange factor osg-1 (1182 aa).

Positions 1 to 12 (MLNPNDADDSDS) are enriched in acidic residues. Positions 1-96 (MLNPNDADDS…TNSEPNVDMP (96 aa)) are disordered. A compositionally biased stretch (polar residues) spans 29–41 (ATVSPSTRNSFYN). Residues 69 to 78 (ASRERSESRR) show a composition bias toward basic and acidic residues. The DH domain occupies 357–544 (VRHLAARELL…HCLAVAINQH (188 aa)). The stretch at 637 to 669 (EDVQISKDTLSQLEEVERKLESSREDDRVLKKM) forms a coiled coil. The disordered stretch occupies residues 863–884 (INSSGSDTESSSDEGTSTAGQT). The segment covering 865–879 (SSGSDTESSSDEGTS) has biased composition (low complexity). A coiled-coil region spans residues 897 to 922 (VVNSTERVRSRARDRLARLRNSITSI).

As to expression, expressed in muscles in the body wall and head, and in the nervous system in neurons including FLP and ASE neurons in the head.

Probable guanine nucleotide exchange factor which regulates the Rho GTPase rho-1. Functions in ASE sensory neurons where it promotes neuronal degeneration under conditions of oxidative stress. The chain is Rho guanine nucleotide exchange factor osg-1 from Caenorhabditis elegans.